Consider the following 247-residue polypeptide: Protein IRON-RELATED TRANSCRIPTION FACTOR 2 (247 aa).

The short motif at 68 to 75 is the Nuclear localization signal element; sequence HRKLSHNA. The segment at 68–81 is basic motif; it reads HRKLSHNAYERDRR. The region spanning 68-119 is the bHLH domain; the sequence is HRKLSHNAYERDRRKQLNELYSSLRALLPDADHTKLSIPTTVSRVLKYIPEL. Positions 82–119 are helix-loop-helix motif; sequence KQLNELYSSLRALLPDADHTKLSIPTTVSRVLKYIPEL.

This sequence belongs to the bHLH protein family. As to quaternary structure, forms homodimers. Interacts with BHLH156 in the nucleus. As to expression, expressed constitutively at low levels in the roots. Also observed in flowers, developing seeds, embryos and vascular bundles.

It is found in the nucleus. Its subcellular location is the cytoplasm. Functionally, transcription activator that binds to the DNA motif 5'-CACGTGG-3' in the promoter of iron (Fe) deficiency-inducible genes as well as of genes involved in iron homeostasis, thus contributing to basal tolerance to iron deficiency, iron uptake from soil and iron transport, particularly during seed maturation and germination. Promotes the accumulation of mugineic acid family phytosiderophores (MAs). Required for ethylene-mediated signaling during iron deficiency responses. Improves growth and yield, especially in calcareous soil with low iron availability. Promotes iron concentration in shoots and grain. This Oryza sativa subsp. japonica (Rice) protein is Protein IRON-RELATED TRANSCRIPTION FACTOR 2.